The following is a 389-amino-acid chain: Ribosomal RNA large subunit methyltransferase M (389 aa).

Over residues Met-1–Thr-13 the composition is skewed to polar residues. Residues Met-1–Ser-24 are disordered. Residues Ser-214, Ala-247 to Gly-250, Asp-266, Asp-286, and Asp-302 each bind S-adenosyl-L-methionine. Lys-331 serves as the catalytic Proton acceptor.

Belongs to the class I-like SAM-binding methyltransferase superfamily. RNA methyltransferase RlmE family. RlmM subfamily. As to quaternary structure, monomer.

The protein localises to the cytoplasm. It carries out the reaction cytidine(2498) in 23S rRNA + S-adenosyl-L-methionine = 2'-O-methylcytidine(2498) in 23S rRNA + S-adenosyl-L-homocysteine + H(+). In terms of biological role, catalyzes the 2'-O-methylation at nucleotide C2498 in 23S rRNA. This chain is Ribosomal RNA large subunit methyltransferase M, found in Hahella chejuensis (strain KCTC 2396).